The following is a 218-amino-acid chain: 2-phospho-L-lactate guanylyltransferase (218 aa).

This sequence belongs to the CofC family. As to quaternary structure, homodimer.

It carries out the reaction (2S)-2-phospholactate + GTP + H(+) = (2S)-lactyl-2-diphospho-5'-guanosine + diphosphate. The protein operates within cofactor biosynthesis; coenzyme F420 biosynthesis. Guanylyltransferase that catalyzes the activation of (2S)-2-phospholactate (2-PL) as (2S)-lactyl-2-diphospho-5'-guanosine, via the condensation of 2-PL with GTP. It is involved in the biosynthesis of coenzyme F420, a hydride carrier cofactor. This Methanocaldococcus fervens (strain DSM 4213 / JCM 15782 / AG86) (Methanococcus fervens) protein is 2-phospho-L-lactate guanylyltransferase.